We begin with the raw amino-acid sequence, 269 residues long: NAD-capped RNA hydrolase NudC (269 aa).

Residue R74 coordinates substrate. Zn(2+) contacts are provided by C103, C106, C121, and C124. Y129 serves as a coordination point for substrate. The Nudix hydrolase domain maps to 130–253 (PRIFPCIIVA…TIARQLIENT (124 aa)). Residues A163, E179, and E183 each contribute to the a divalent metal cation site. Positions 164–185 (GFLEVGETLEQCVAREVKEETG) match the Nudix box motif. 197-204 (QPWAFPSS) provides a ligand contact to substrate. E224 contributes to the a divalent metal cation binding site. A246 is a substrate binding site.

This sequence belongs to the Nudix hydrolase family. NudC subfamily. Homodimer. The cofactor is Mg(2+). Mn(2+) is required as a cofactor. Requires Zn(2+) as cofactor.

The enzyme catalyses a 5'-end NAD(+)-phospho-ribonucleoside in mRNA + H2O = a 5'-end phospho-adenosine-phospho-ribonucleoside in mRNA + beta-nicotinamide D-ribonucleotide + 2 H(+). It catalyses the reaction NAD(+) + H2O = beta-nicotinamide D-ribonucleotide + AMP + 2 H(+). It carries out the reaction NADH + H2O = reduced beta-nicotinamide D-ribonucleotide + AMP + 2 H(+). MRNA decapping enzyme that specifically removes the nicotinamide adenine dinucleotide (NAD) cap from a subset of mRNAs by hydrolyzing the diphosphate linkage to produce nicotinamide mononucleotide (NMN) and 5' monophosphate mRNA. The NAD-cap is present at the 5'-end of some mRNAs and stabilizes RNA against 5'-processing. Has preference for mRNAs with a 5'-end purine. Catalyzes the hydrolysis of a broad range of dinucleotide pyrophosphates. The sequence is that of NAD-capped RNA hydrolase NudC from Vibrio atlanticus (strain LGP32) (Vibrio splendidus (strain Mel32)).